The following is a 43-amino-acid chain: Alpha-1-antiproteinase 4 (43 aa).

The protein belongs to the serpin family. In terms of processing, N-glycosylated with carbohydrates having biantennary side chains. In terms of tissue distribution, plasma.

It is found in the secreted. This Equus caballus (Horse) protein is Alpha-1-antiproteinase 4.